The primary structure comprises 249 residues: Probable phosphatase VV2_1469 (249 aa).

Residues H8, H10, H16, H41, E74, H102, H132, D194, and H196 each contribute to the Zn(2+) site.

This sequence belongs to the PHP family. Zn(2+) serves as cofactor.

This chain is Probable phosphatase VV2_1469, found in Vibrio vulnificus (strain CMCP6).